The following is a 736-amino-acid chain: Probable beta-glucosidase L (736 aa).

Positions 1–21 (MNYRVPSLKATALAMAALTQA) are cleaved as a signal peptide. Asn224 is a glycosylation site (N-linked (GlcNAc...) asparagine). Asp252 is a catalytic residue. Residues Asn295, Asn363, Asn429, and Asn607 are each glycosylated (N-linked (GlcNAc...) asparagine).

The protein belongs to the glycosyl hydrolase 3 family.

The protein resides in the secreted. The enzyme catalyses Hydrolysis of terminal, non-reducing beta-D-glucosyl residues with release of beta-D-glucose.. Its pathway is glycan metabolism; cellulose degradation. Beta-glucosidases are one of a number of cellulolytic enzymes involved in the degradation of cellulosic biomass. Catalyzes the last step releasing glucose from the inhibitory cellobiose. The protein is Probable beta-glucosidase L (bglL) of Aspergillus terreus (strain NIH 2624 / FGSC A1156).